A 188-amino-acid polypeptide reads, in one-letter code: Peptide deformylase (188 aa).

Fe cation contacts are provided by Cys107 and His149. Residue Glu150 is part of the active site. Residue His153 participates in Fe cation binding.

Belongs to the polypeptide deformylase family. Fe(2+) is required as a cofactor.

It carries out the reaction N-terminal N-formyl-L-methionyl-[peptide] + H2O = N-terminal L-methionyl-[peptide] + formate. In terms of biological role, removes the formyl group from the N-terminal Met of newly synthesized proteins. Requires at least a dipeptide for an efficient rate of reaction. N-terminal L-methionine is a prerequisite for activity but the enzyme has broad specificity at other positions. The sequence is that of Peptide deformylase from Thermosynechococcus vestitus (strain NIES-2133 / IAM M-273 / BP-1).